The primary structure comprises 211 residues: Ribonuclease HII (211 aa).

The 191-residue stretch at 21-211 (SSIAGLDEAG…APLKSMFDVI (191 aa)) folds into the RNase H type-2 domain. A divalent metal cation is bound by residues Asp27, Glu28, and Asp122.

This sequence belongs to the RNase HII family. It depends on Mn(2+) as a cofactor. The cofactor is Mg(2+).

It is found in the cytoplasm. The catalysed reaction is Endonucleolytic cleavage to 5'-phosphomonoester.. In terms of biological role, endonuclease that specifically degrades the RNA of RNA-DNA hybrids. The polypeptide is Ribonuclease HII (Dehalococcoides mccartyi (strain ATCC BAA-2266 / KCTC 15142 / 195) (Dehalococcoides ethenogenes (strain 195))).